We begin with the raw amino-acid sequence, 239 residues long: tRNA (guanine-N(7)-)-methyltransferase (239 aa).

4 residues coordinate S-adenosyl-L-methionine: E69, E94, D121, and D144. Residue D144 is part of the active site. Residue K148 participates in substrate binding. An interaction with RNA region spans residues 150–155 (RHNKRR). Residues D180 and 217–220 (TKFE) contribute to the substrate site.

This sequence belongs to the class I-like SAM-binding methyltransferase superfamily. TrmB family. As to quaternary structure, monomer.

The enzyme catalyses guanosine(46) in tRNA + S-adenosyl-L-methionine = N(7)-methylguanosine(46) in tRNA + S-adenosyl-L-homocysteine. It participates in tRNA modification; N(7)-methylguanine-tRNA biosynthesis. In terms of biological role, catalyzes the formation of N(7)-methylguanine at position 46 (m7G46) in tRNA. The chain is tRNA (guanine-N(7)-)-methyltransferase from Yersinia pseudotuberculosis serotype I (strain IP32953).